A 361-amino-acid polypeptide reads, in one-letter code: 5-formaminoimidazole-4-carboxamide-1-(beta)-D-ribofuranosyl 5'-monophosphate synthetase (361 aa).

2 residues coordinate 5-amino-1-(5-phospho-beta-D-ribosyl)imidazole-4-carboxamide: H27 and S94. The ATP-grasp domain occupies 116–348 (RAILRWEAER…MGQRIAREIK (233 aa)). Residues 146–208 (PDDI…ANYC) and E230 contribute to the ATP site. N258 is a 5-amino-1-(5-phospho-beta-D-ribosyl)imidazole-4-carboxamide binding site. Mg(2+) contacts are provided by Q297 and E310.

The protein belongs to the phosphohexose mutase family. Mg(2+) is required as a cofactor. Requires Mn(2+) as cofactor.

It carries out the reaction 5-amino-1-(5-phospho-beta-D-ribosyl)imidazole-4-carboxamide + formate + ATP = 5-formamido-1-(5-phospho-D-ribosyl)imidazole-4-carboxamide + ADP + phosphate. The protein operates within purine metabolism; IMP biosynthesis via de novo pathway; 5-formamido-1-(5-phospho-D-ribosyl)imidazole-4-carboxamide from 5-amino-1-(5-phospho-D-ribosyl)imidazole-4-carboxamide (formate route): step 1/1. In terms of biological role, catalyzes the ATP- and formate-dependent formylation of 5-aminoimidazole-4-carboxamide-1-beta-d-ribofuranosyl 5'-monophosphate (AICAR) to 5-formaminoimidazole-4-carboxamide-1-beta-d-ribofuranosyl 5'-monophosphate (FAICAR) in the absence of folates. The protein is 5-formaminoimidazole-4-carboxamide-1-(beta)-D-ribofuranosyl 5'-monophosphate synthetase of Methanococcus maripaludis (strain C7 / ATCC BAA-1331).